We begin with the raw amino-acid sequence, 213 residues long: Small ribosomal subunit protein eS1 (213 aa).

Belongs to the eukaryotic ribosomal protein eS1 family.

This is Small ribosomal subunit protein eS1 from Desulfurococcus amylolyticus (strain DSM 18924 / JCM 16383 / VKM B-2413 / 1221n) (Desulfurococcus kamchatkensis).